The primary structure comprises 302 residues: Segregation and condensation protein A (302 aa).

It belongs to the ScpA family. Component of a cohesin-like complex composed of ScpA, ScpB and the Smc homodimer, in which ScpA and ScpB bind to the head domain of Smc. The presence of the three proteins is required for the association of the complex with DNA.

The protein resides in the cytoplasm. In terms of biological role, participates in chromosomal partition during cell division. May act via the formation of a condensin-like complex containing Smc and ScpB that pull DNA away from mid-cell into both cell halves. In Xylella fastidiosa (strain Temecula1 / ATCC 700964), this protein is Segregation and condensation protein A.